The chain runs to 612 residues: Elongation factor 4 (612 aa).

Residues 11-193 (KHIRNFSIIA…KLVTDVPAPT (183 aa)) form the tr-type G domain. GTP-binding positions include 23 to 28 (DHGKST) and 140 to 143 (NKID).

Belongs to the TRAFAC class translation factor GTPase superfamily. Classic translation factor GTPase family. LepA subfamily.

Its subcellular location is the cell membrane. It catalyses the reaction GTP + H2O = GDP + phosphate + H(+). Its function is as follows. Required for accurate and efficient protein synthesis under certain stress conditions. May act as a fidelity factor of the translation reaction, by catalyzing a one-codon backward translocation of tRNAs on improperly translocated ribosomes. Back-translocation proceeds from a post-translocation (POST) complex to a pre-translocation (PRE) complex, thus giving elongation factor G a second chance to translocate the tRNAs correctly. Binds to ribosomes in a GTP-dependent manner. This is Elongation factor 4 from Latilactobacillus sakei subsp. sakei (strain 23K) (Lactobacillus sakei subsp. sakei).